Reading from the N-terminus, the 463-residue chain is Fumarate hydratase class II (463 aa).

Substrate-binding positions include 97-99 (SGT), 128-131 (HPND), 138-140 (SSN), and Thr186. His187 serves as the catalytic Proton donor/acceptor. Ser317 is a catalytic residue. Substrate contacts are provided by residues Ser318 and 323–325 (KVN).

Belongs to the class-II fumarase/aspartase family. Fumarase subfamily. As to quaternary structure, homotetramer.

Its subcellular location is the cytoplasm. The catalysed reaction is (S)-malate = fumarate + H2O. The protein operates within carbohydrate metabolism; tricarboxylic acid cycle; (S)-malate from fumarate: step 1/1. Its function is as follows. Involved in the TCA cycle. Catalyzes the stereospecific interconversion of fumarate to L-malate. This is Fumarate hydratase class II from Campylobacter jejuni subsp. jejuni serotype O:2 (strain ATCC 700819 / NCTC 11168).